Here is a 94-residue protein sequence, read N- to C-terminus: HssA/B-like protein 51 (94 aa).

A disordered region spans residues 1–25; it reads MTLFSSISSISNPMTNSKSRISSFG.

It belongs to the hssA/B family.

The protein is HssA/B-like protein 51 (hssl51) of Dictyostelium discoideum (Social amoeba).